Consider the following 844-residue polypeptide: Patched-related protein 9 (844 aa).

Residues 264 to 421 (LIPWMPWTSL…VTFFNAVMSL (158 aa)) form the SSD domain.

Belongs to the patched family.

This chain is Patched-related protein 9 (ptr-9), found in Caenorhabditis elegans.